We begin with the raw amino-acid sequence, 237 residues long: Cysteine-rich venom protein DIS3 (237 aa).

A signal peptide spans 1-18; it reads MFVFILLSLAAVLQQSFG. The region spanning 37–165 is the SCP domain; sequence VDKHNAFRRS…SYDYFYVCQY (129 aa). 7 cysteine pairs are disulfide-bonded: cysteine 74-cysteine 152, cysteine 91-cysteine 166, cysteine 147-cysteine 163, cysteine 185-cysteine 192, cysteine 188-cysteine 197, cysteine 201-cysteine 234, and cysteine 219-cysteine 232. The ShKT domain maps to 201 to 234; the sequence is CSREDVFTNCKSLVAKSNCQDDYIRKNCLATCFC.

It belongs to the CRISP family. Expressed by the venom gland.

It localises to the secreted. Functionally, weakly blocks contraction of smooth muscle elicited by high potassium-induced depolarization, but does not block caffeine-stimulated contraction. May target voltage-gated calcium channels on smooth muscle. The protein is Cysteine-rich venom protein DIS3 of Dispholidus typus (Boomslang).